We begin with the raw amino-acid sequence, 131 residues long: uncharacterized protein (131 aa).

The segment at Gln-15 to Glu-43 is disordered. Positions Ala-23 to Asn-34 are enriched in polar residues.

Belongs to the PDCD5 family.

This is an uncharacterized protein from Schizosaccharomyces pombe (strain 972 / ATCC 24843) (Fission yeast).